Consider the following 351-residue polypeptide: Bifunctional UDP-glucose 4-epimerase and UDP-xylose 4-epimerase 3 (351 aa).

Residue 8-39 (NILVTGGAGFIGTHTVVQLLNQGFKVTIIDNL) coordinates NAD(+). Substrate is bound at residue S134. Y158 (proton acceptor) is an active-site residue.

Belongs to the NAD(P)-dependent epimerase/dehydratase family. As to quaternary structure, homodimer. Heterodimer. It depends on NAD(+) as a cofactor. As to expression, ubiquitous.

The catalysed reaction is UDP-alpha-D-glucose = UDP-alpha-D-galactose. It carries out the reaction UDP-beta-L-arabinopyranose = UDP-alpha-D-xylose. Its pathway is carbohydrate metabolism; galactose metabolism. The protein operates within nucleotide-sugar biosynthesis; UDP-L-arabinose biosynthesis; UDP-L-arabinose from UDP-alpha-D-xylose: step 1/1. It functions in the pathway cell wall biogenesis; cell wall polysaccharide biosynthesis. Strongly inhibited by UDP. In terms of biological role, catalyzes the interconversion between UDP-glucose and UDP-galactose and the interconversion between UDP-arabinose and UDP-xylose. Cooperates with UGE2 in pollen development. May preferentially act in the UDP-galactose to UDP-glucose direction, therefore displaying a role in carbohydrate catabolism. The chain is Bifunctional UDP-glucose 4-epimerase and UDP-xylose 4-epimerase 3 (UGE3) from Arabidopsis thaliana (Mouse-ear cress).